A 178-amino-acid chain; its full sequence is Ribosome maturation factor RimM (178 aa).

Residues 99–178 enclose the PRC barrel domain; that stretch reads EGDYYWHDLI…TIEVDWDAGF (80 aa).

The protein belongs to the RimM family. As to quaternary structure, binds ribosomal protein uS19.

Its subcellular location is the cytoplasm. An accessory protein needed during the final step in the assembly of 30S ribosomal subunit, possibly for assembly of the head region. Essential for efficient processing of 16S rRNA. May be needed both before and after RbfA during the maturation of 16S rRNA. It has affinity for free ribosomal 30S subunits but not for 70S ribosomes. The polypeptide is Ribosome maturation factor RimM (Haemophilus influenzae (strain ATCC 51907 / DSM 11121 / KW20 / Rd)).